A 312-amino-acid chain; its full sequence is Malate dehydrogenase (312 aa).

NAD(+) contacts are provided by residues 7 to 13 (GAAGGIG) and Asp34. Substrate-binding residues include Arg81 and Arg87. NAD(+) is bound by residues Asn94 and 117–119 (ITN). The substrate site is built by Asn119 and Arg153. The Proton acceptor role is filled by His177. Met227 lines the NAD(+) pocket.

Belongs to the LDH/MDH superfamily. MDH type 1 family. Homodimer.

It carries out the reaction (S)-malate + NAD(+) = oxaloacetate + NADH + H(+). Catalyzes the reversible oxidation of malate to oxaloacetate. In Photobacterium profundum (strain SS9), this protein is Malate dehydrogenase.